The primary structure comprises 287 residues: Genetic interactor of prohibitin 7, mitochondrial (287 aa).

The N-terminal 24 residues, Met-1–Lys-24, are a transit peptide targeting the mitochondrion. A helical membrane pass occupies residues Ser-250–Leu-266.

The protein belongs to the GEP7 family.

It is found in the mitochondrion membrane. Functionally, involved in respiratory growth and required for cell survival in the absence of prohibitins or GEM1. The chain is Genetic interactor of prohibitin 7, mitochondrial (GEP7) from Saccharomyces cerevisiae (strain YJM789) (Baker's yeast).